Here is a 160-residue protein sequence, read N- to C-terminus: Cytochrome b6-f complex subunit 4 (160 aa).

The next 3 helical transmembrane spans lie at 36 to 56, 95 to 115, and 131 to 151; these read LLYV…GLAV, LLGI…PFIE, and TFFM…IFPI.

The protein belongs to the cytochrome b family. PetD subfamily. As to quaternary structure, the 4 large subunits of the cytochrome b6-f complex are cytochrome b6, subunit IV (17 kDa polypeptide, PetD), cytochrome f and the Rieske protein, while the 4 small subunits are PetG, PetL, PetM and PetN. The complex functions as a dimer.

It localises to the cellular thylakoid membrane. Functionally, component of the cytochrome b6-f complex, which mediates electron transfer between photosystem II (PSII) and photosystem I (PSI), cyclic electron flow around PSI, and state transitions. This chain is Cytochrome b6-f complex subunit 4, found in Gloeothece citriformis (strain PCC 7424) (Cyanothece sp. (strain PCC 7424)).